The sequence spans 204 residues: Large ribosomal subunit protein eL15z (204 aa).

The segment at 161-204 (LRGLTSEGKKNRGLRGKGHNNHKNRPSRRATWKKNNSLSLRRYR) is disordered. Positions 171-192 (NRGLRGKGHNNHKNRPSRRATW) are enriched in basic residues. Over residues 193-204 (KKNNSLSLRRYR) the composition is skewed to polar residues.

Belongs to the eukaryotic ribosomal protein eL15 family.

The protein is Large ribosomal subunit protein eL15z (RPL15A) of Arabidopsis thaliana (Mouse-ear cress).